The following is a 190-amino-acid chain: RNA pyrophosphohydrolase (190 aa).

The Nudix hydrolase domain occupies 6-149 (GYRPNVGIVL…KRSVYARALC (144 aa)). The short motif at 38-59 (GGMHSDETPVEAMYRELNEETG) is the Nudix box element.

Belongs to the Nudix hydrolase family. RppH subfamily. A divalent metal cation serves as cofactor.

Accelerates the degradation of transcripts by removing pyrophosphate from the 5'-end of triphosphorylated RNA, leading to a more labile monophosphorylated state that can stimulate subsequent ribonuclease cleavage. This chain is RNA pyrophosphohydrolase, found in Xylella fastidiosa (strain Temecula1 / ATCC 700964).